The chain runs to 232 residues: Orotate phosphoribosyltransferase (232 aa).

5-phospho-alpha-D-ribose 1-diphosphate contacts are provided by residues Arg-107, Lys-108, Lys-111, and 133-141; that span reads EDLTTDGGS. Thr-137 provides a ligand contact to orotate.

Belongs to the purine/pyrimidine phosphoribosyltransferase family. PyrE subfamily. Homodimer. The cofactor is Mg(2+).

The catalysed reaction is orotidine 5'-phosphate + diphosphate = orotate + 5-phospho-alpha-D-ribose 1-diphosphate. It functions in the pathway pyrimidine metabolism; UMP biosynthesis via de novo pathway; UMP from orotate: step 1/2. Catalyzes the transfer of a ribosyl phosphate group from 5-phosphoribose 1-diphosphate to orotate, leading to the formation of orotidine monophosphate (OMP). This Cereibacter sphaeroides (strain ATCC 17023 / DSM 158 / JCM 6121 / CCUG 31486 / LMG 2827 / NBRC 12203 / NCIMB 8253 / ATH 2.4.1.) (Rhodobacter sphaeroides) protein is Orotate phosphoribosyltransferase.